Consider the following 348-residue polypeptide: SUMO-activating enzyme subunit 1 (348 aa).

This sequence belongs to the ubiquitin-activating E1 family. In terms of assembly, heterodimer of sae1 and uba2/sae2. The heterodimer corresponds to the two domains that are encoded on a single polypeptide chain in ubiquitin-activating enzyme E1. Interacts with ube2i.

The protein localises to the nucleus. It participates in protein modification; protein sumoylation. The heterodimer acts as an E1 ligase for sumo1, sumo2, and sumo3. It mediates ATP-dependent activation of sumo proteins followed by formation of a thioester bond between a sumo protein and a conserved active site cysteine residue on uba2/sae2. This is SUMO-activating enzyme subunit 1 (sae1) from Danio rerio (Zebrafish).